Here is a 319-residue protein sequence, read N- to C-terminus: Taste receptor type 2 member 14 (319 aa).

Residues 1–7 (MDGVIKS) lie on the Extracellular side of the membrane. Residues 8–28 (IFTFILIVEFIIGNLGNSFIV) traverse the membrane as a helical segment. The Cytoplasmic portion of the chain corresponds to 29 to 55 (LVNCIDWVKRRKISLVDQILIALAISR). Residues 56–76 (ISLVWSIFGSWCVSVFFPALF) traverse the membrane as a helical segment. The Extracellular portion of the chain corresponds to 77-87 (ATEKLLRMLTN). Cholesterol-binding residues include T86 and W89. A helical transmembrane segment spans residues 88-108 (IWTVTNHFSVWLATILGTFYF). At 109-129 (LKIANFSNSIFLYLKWRVKKV) the chain is on the cytoplasmic side. A helical membrane pass occupies residues 130-150 (VLVLLLVTLGLLFLNILLINI). Over 151 to 184 (HINASINGYRGNMTCSSASCNFIRFSRAIALTST) the chain is Extracellular. N153 and N162 each carry an N-linked (GlcNAc...) asparagine glycan. A cholesterol-binding site is contributed by A180. A helical transmembrane segment spans residues 185-205 (VFVLIPFTLSLATSLLLSFSL). At 206-233 (WKHHKKMQHTVKGYRDVSTKAHRGVMQT) the chain is on the cytoplasmic side. The helical transmembrane segment at 234–254 (VITFLLLYAVFLLTFFISIWA) threads the bilayer. Residues 255 to 263 (SVRLKENQI) lie on the Extracellular side of the membrane. The helical transmembrane segment at 264 to 284 (IILSEMMGLAYPSGHSCVLIL) threads the bilayer. The cholesterol site is built by S267 and M270. The Cytoplasmic segment spans residues 285-319 (GNKKLRQASLSVLWWLRYRFKHGEPSGHKEFRESS).

It belongs to the G-protein coupled receptor T2R family. Core component of the TAS2R14-GNAI1 complex, consisting of TAS2R14, GNAI1, GNB1 and GNG2; within the complex interacts with GNAI1. Core component of the TAS2R14-GNAT3 complex, consisting of TAS2R14, GNAT3, GNB1 and GNG2; within the complex interacts with GNAT3. Core component of the TAS2R14-GNAS2 complex, consisting of TAS2R14, GNAS2, GNB1 and GNG2; within the complex interacts with GNAS2.

It localises to the membrane. The enzyme catalyses Ca(2+)(in) = Ca(2+)(out). The catalysed reaction is 3',5'-cyclic AMP(in) = 3',5'-cyclic AMP(out). Its activity is regulated as follows. Basal activity is enhanced by binding to bitter tastants, such as flufenamic acid and aristolochic acid. Regulated by cholesterol in a concentration-dependent manner. Gustducin-linked G-protein coupled receptor that plays a role in the perception of bitterness. The activity of this receptor stimulates GNAT3, activating the gustducin G-protein pathway. Likely plays a role in sensing the chemical composition of the gastrointestinal content and other extra-oral tissues via the inhibitory G-protein pathways. This Macaca mulatta (Rhesus macaque) protein is Taste receptor type 2 member 14 (TAS2R14).